The sequence spans 53 residues: Lectin alpha chain (53 aa).

Belongs to the leguminous lectin family. As to quaternary structure, tetramer of two alpha and two beta chains.

The chain is Lectin alpha chain from Lathyrus clymenum (Spanish vetchling).